Consider the following 156-residue polypeptide: Large ribosomal subunit protein uL15 (156 aa).

A compositionally biased stretch (basic residues) spans 1–16 (MVRRFKRAVKYRRGSR). The tract at residues 1-35 (MVRRFKRAVKYRRGSRTHGWGRVGQHRKSGGSGGK) is disordered.

Belongs to the universal ribosomal protein uL15 family. As to quaternary structure, part of the 50S ribosomal subunit.

Binds to the 23S rRNA. This Pyrobaculum neutrophilum (strain DSM 2338 / JCM 9278 / NBRC 100436 / V24Sta) (Thermoproteus neutrophilus) protein is Large ribosomal subunit protein uL15.